The following is a 118-amino-acid chain: Non-specific lipid-transfer protein D (118 aa).

The first 25 residues, 1–25 (MAGLMKLACLIFACMIVAGPITSNA), serve as a signal peptide directing secretion. Intrachain disulfides connect C29–C77, C39–C54, C55–C100, and C75–C114.

The protein belongs to the plant LTP family.

In terms of biological role, plant non-specific lipid-transfer proteins transfer phospholipids as well as galactolipids across membranes. May play a role in wax or cutin deposition in the cell walls of expanding epidermal cells and certain secretory tissues. In Brassica oleracea var. italica (Broccoli), this protein is Non-specific lipid-transfer protein D (WAX9D).